The chain runs to 497 residues: Cysteine--tRNA ligase (497 aa).

A Zn(2+)-binding site is contributed by Cys46. Positions 48–58 match the 'HIGH' region motif; it reads PTVYSDAHLGH. 3 residues coordinate Zn(2+): Cys237, His262, and Glu266. A 'KMSKS' region motif is present at residues 293 to 297; the sequence is KMSKS. Residue Lys296 coordinates ATP.

This sequence belongs to the class-I aminoacyl-tRNA synthetase family. In terms of assembly, monomer. The cofactor is Zn(2+).

The protein localises to the cytoplasm. It carries out the reaction tRNA(Cys) + L-cysteine + ATP = L-cysteinyl-tRNA(Cys) + AMP + diphosphate. The chain is Cysteine--tRNA ligase from Deinococcus geothermalis (strain DSM 11300 / CIP 105573 / AG-3a).